A 138-amino-acid polypeptide reads, in one-letter code: Large ribosomal subunit protein uL16 (138 aa).

Residues 1 to 17 (MLIPRKVKHRKQHHPKQ) are compositionally biased toward basic residues. The tract at residues 1-24 (MLIPRKVKHRKQHHPKQRGIASGG) is disordered.

The protein belongs to the universal ribosomal protein uL16 family. As to quaternary structure, part of the 50S ribosomal subunit.

Its function is as follows. Binds 23S rRNA and is also seen to make contacts with the A and possibly P site tRNAs. The protein is Large ribosomal subunit protein uL16 of Mycolicibacterium vanbaalenii (strain DSM 7251 / JCM 13017 / BCRC 16820 / KCTC 9966 / NRRL B-24157 / PYR-1) (Mycobacterium vanbaalenii).